A 419-amino-acid chain; its full sequence is Serine hydroxymethyltransferase 1 (419 aa).

Residues L121 and 125 to 127 (GHL) each bind (6S)-5,6,7,8-tetrahydrofolate. At K230 the chain carries N6-(pyridoxal phosphate)lysine. 356 to 358 (SPF) is a binding site for (6S)-5,6,7,8-tetrahydrofolate.

The protein belongs to the SHMT family. Homodimer. It depends on pyridoxal 5'-phosphate as a cofactor.

It is found in the cytoplasm. The catalysed reaction is (6R)-5,10-methylene-5,6,7,8-tetrahydrofolate + glycine + H2O = (6S)-5,6,7,8-tetrahydrofolate + L-serine. The protein operates within one-carbon metabolism; tetrahydrofolate interconversion. Its pathway is amino-acid biosynthesis; glycine biosynthesis; glycine from L-serine: step 1/1. Functionally, catalyzes the reversible interconversion of serine and glycine with tetrahydrofolate (THF) serving as the one-carbon carrier. This reaction serves as the major source of one-carbon groups required for the biosynthesis of purines, thymidylate, methionine, and other important biomolecules. Also exhibits THF-independent aldolase activity toward beta-hydroxyamino acids, producing glycine and aldehydes, via a retro-aldol mechanism. This is Serine hydroxymethyltransferase 1 from Colwellia psychrerythraea (strain 34H / ATCC BAA-681) (Vibrio psychroerythus).